The primary structure comprises 258 residues: Ditrans,polycis-undecaprenyl-diphosphate synthase ((2E,6E)-farnesyl-diphosphate specific) (258 aa).

Aspartate 24 is an active-site residue. Aspartate 24 contacts Mg(2+). Residues 25–28 (GNGR), tryptophan 29, arginine 37, histidine 41, and 69–71 (SSE) contribute to the substrate site. The active-site Proton acceptor is asparagine 72. Residues tryptophan 73, arginine 75, arginine 192, and 198–200 (RIS) each bind substrate. Residue glutamate 211 coordinates Mg(2+).

Belongs to the UPP synthase family. In terms of assembly, homodimer. Mg(2+) serves as cofactor.

It catalyses the reaction 8 isopentenyl diphosphate + (2E,6E)-farnesyl diphosphate = di-trans,octa-cis-undecaprenyl diphosphate + 8 diphosphate. Functionally, catalyzes the sequential condensation of isopentenyl diphosphate (IPP) with (2E,6E)-farnesyl diphosphate (E,E-FPP) to yield (2Z,6Z,10Z,14Z,18Z,22Z,26Z,30Z,34E,38E)-undecaprenyl diphosphate (di-trans,octa-cis-UPP). UPP is the precursor of glycosyl carrier lipid in the biosynthesis of bacterial cell wall polysaccharide components such as peptidoglycan and lipopolysaccharide. The sequence is that of Ditrans,polycis-undecaprenyl-diphosphate synthase ((2E,6E)-farnesyl-diphosphate specific) from Xanthomonas campestris pv. campestris (strain ATCC 33913 / DSM 3586 / NCPPB 528 / LMG 568 / P 25).